Consider the following 142-residue polypeptide: MENKGIRKILPHRYPFLLVDRIIEIEEGKKAVGIKNVTANEPFFQGHFPDNPIMPGVLIVEALAQVAGIAVMNIEEFKGKLGLFTGIDKCRFKKVVRPGDQLVLEVLIDSIKMGLVKAKGVAKVGDEVAATAELMFIMTEEG.

H47 is an active-site residue.

The protein belongs to the thioester dehydratase family. FabZ subfamily.

It is found in the cytoplasm. It catalyses the reaction a (3R)-hydroxyacyl-[ACP] = a (2E)-enoyl-[ACP] + H2O. Functionally, involved in unsaturated fatty acids biosynthesis. Catalyzes the dehydration of short chain beta-hydroxyacyl-ACPs and long chain saturated and unsaturated beta-hydroxyacyl-ACPs. This chain is 3-hydroxyacyl-[acyl-carrier-protein] dehydratase FabZ, found in Thermoanaerobacter sp. (strain X514).